A 437-amino-acid chain; its full sequence is Vacuolar cation/proton exchanger 2 (437 aa).

The disordered stretch occupies residues 1-29; that stretch reads MMGAEKAEGMEELELEEGGGSPSPSPMTA. Over 1 to 65 the chain is Cytoplasmic; it reads MMGAEKAEGM…KWRRALTSVR (65 aa). A helical transmembrane segment spans residues 66-86; that stretch reads VVILQAKINVLLPFGPLAVML. At 87 to 88 the chain is on the extracellular side; that stretch reads HY. A helical membrane pass occupies residues 89–109; the sequence is LSANHQGWVFLFSLIGITPLA. Residues 110 to 126 are Cytoplasmic-facing; that stretch reads ERLGYATEQLALYTGPT. Residues 127–147 traverse the membrane as a helical segment; the sequence is IGGLLNATFGNATEMIISLYA. The cation selection stretch occupies residues 136–171; it reads GNATEMIISLYALKNGMIRVVQQSLLGSILSNMLLV. The Extracellular segment spans residues 148–161; the sequence is LKNGMIRVVQQSLL. A helical transmembrane segment spans residues 162–182; sequence GSILSNMLLVLGCAFFAGGLV. Residues 183–194 lie on the Cytoplasmic side of the membrane; sequence HPSRDQVFNKAS. A helical transmembrane segment spans residues 195-215; that stretch reads AVVNSGLLLMAVLGLMFPAVL. Over 216 to 228 the chain is Extracellular; the sequence is HFTHSEVQYGKSE. The chain crosses the membrane as a helical span at residues 229–249; sequence VSLSRFSSCIMLVAYASYLFF. Residues 250 to 281 are Cytoplasmic-facing; the sequence is QLKSQRSLYSPIGEQEEEVTEDEEEEKEITQG. The chain crosses the membrane as a helical span at residues 282–302; sequence EAICWLFVLTIWISILSGYLV. The Extracellular portion of the chain corresponds to 303 to 310; sequence DAIQGASE. A helical membrane pass occupies residues 311–331; that stretch reads SLNMPVAFISVILLPIVGNAA. A cation selection region spans residues 328-363; the sequence is GNAAEHASAIMFAMKDKLDITLGVAIGSSTQISMFV. Residues 332–352 lie on the Cytoplasmic side of the membrane; the sequence is EHASAIMFAMKDKLDITLGVA. A helical transmembrane segment spans residues 353-373; that stretch reads IGSSTQISMFVIPFCVVIGWI. Over 374 to 379 the chain is Extracellular; the sequence is MGQQMD. Residues 380–400 form a helical membrane-spanning segment; sequence LNFQLFETATLFITVLVVAFM. The Cytoplasmic segment spans residues 401–408; it reads LQEGTSNY. Residues 409 to 429 form a helical membrane-spanning segment; that stretch reads FKGLMLILCYLIVAASFFVHV. The Extracellular segment spans residues 430–437; sequence DPDSSNNK.

This sequence belongs to the Ca(2+):cation antiporter (CaCA) (TC 2.A.19) family. Cation/proton exchanger (CAX) subfamily. Expressed in roots and shoots.

It localises to the vacuole membrane. Vacuolar cation/proton exchanger (CAX). Translocates Ca(2+) and other metal ions into vacuoles using the proton gradient formed by H(+)-ATPase and H(+)-pyrophosphatase. The protein is Vacuolar cation/proton exchanger 2 (CAX2) of Oryza sativa subsp. japonica (Rice).